We begin with the raw amino-acid sequence, 160 residues long: Putative pre-16S rRNA nuclease (160 aa).

Belongs to the YqgF nuclease family.

The protein localises to the cytoplasm. Functionally, could be a nuclease involved in processing of the 5'-end of pre-16S rRNA. The protein is Putative pre-16S rRNA nuclease of Rhodopseudomonas palustris (strain BisB5).